Here is a 474-residue protein sequence, read N- to C-terminus: Stabilizer of axonemal microtubules 1 (474 aa).

12 mn regions span residues 30-64 (KPCL…KGSI), 65-97 (PMEG…PSEE), 98-131 (NMDL…PYSN), 132-165 (KMEY…PASV), 166-199 (RFDN…LCNI), 200-232 (PLED…PCEI), 233-266 (PFES…GLDM), 267-299 (PFSN…PPED), 300-332 (SMDL…RKSG), 333-366 (RFEG…FPTE), 367-400 (PLDC…RGNV), and 401-434 (PVEG…TFEE). The interval 318–350 (PARSCRPAPQIRKSGRFEGSSTTKDDYKQWSSM) is disordered. The segment at 444 to 474 (KPVSQAGSQQSSHLSVDDSENPSQRKLEVSA) is disordered. Residues 448–457 (QAGSQQSSHL) are compositionally biased toward polar residues.

The protein belongs to the FAM154 family. Associates with microtubules via the Mn regions.

The protein resides in the cytoplasm. The protein localises to the cytoskeleton. It localises to the microtubule organizing center. Its subcellular location is the centrosome. It is found in the centriole. The protein resides in the cilium basal body. The protein localises to the cilium axoneme. It localises to the flagellum axoneme. Its function is as follows. May play a role in the regulation of cilium length. Stabilizes microtubules at low temperature. This is Stabilizer of axonemal microtubules 1 (SAXO1) from Macaca fascicularis (Crab-eating macaque).